The following is a 282-amino-acid chain: PTS system sorbose-specific EIID component (282 aa).

Residues 13 to 281 (TKITKGDMFK…GIVGYWLGIL (269 aa)) enclose the PTS EIID domain. The next 4 membrane-spanning stretches (helical) occupy residues 135-155 (LGASLALQGSWLGPILFFVAF), 197-217 (GLFIMGILVTKWTTINVPLVV), 234-254 (ILDQFCPGLLALGWTLLCMYL), and 261-281 (PILLIFALFGVGIVGYWLGIL).

It localises to the cell membrane. In terms of biological role, the phosphoenolpyruvate-dependent sugar phosphotransferase system (PTS), a major carbohydrate active transport system, catalyzes the phosphorylation of incoming sugar substrates concomitant with their translocation across the cell membrane. The enzyme II SorABCD PTS system is involved in L-sorbose transport. The sequence is that of PTS system sorbose-specific EIID component from Lacticaseibacillus casei (Lactobacillus casei).